Consider the following 994-residue polypeptide: Sarcoplasmic/endoplasmic reticulum calcium ATPase 1 (994 aa).

Over 1–48 (MEQAHTKTTEECLAYFGVNENTGLSLDQVKKNFDKFGPNELPAEEGKS) the chain is Cytoplasmic. Residues 49–69 (LWELVAEQFEDLLVRILLLAA) traverse the membrane as a helical segment. Residues 70-89 (IISFVLAWFEEGEETVTAFV) are Lumenal-facing. The chain crosses the membrane as a helical span at residues 90 to 110 (EPFVILLILIANAVVGVWQER). The Cytoplasmic portion of the chain corresponds to 111–253 (NAEDAIEALK…QEKTPLQQKL (143 aa)). A helical transmembrane segment spans residues 254-273 (DEFGEQLSKVISLICVAVWL). Residues 274-295 (INIGHFNDPIHGGSWIKGAIYY) are Lumenal-facing. Residues 296 to 313 (FKIAVALAVAAIPEGLPA) traverse the membrane as a helical segment. Residues Val304, Ala305, Ile307, and Glu309 each contribute to the Ca(2+) site. The Cytoplasmic segment spans residues 314 to 757 (VITTCLALGT…EEGRAIYNNM (444 aa)). Asp351 serves as the catalytic 4-aspartylphosphate intermediate. Mg(2+) contacts are provided by Asp351 and Thr353. Residues Thr353, Glu442, Arg489, Lys515, Arg560, Thr625, Gly626, Asp627, Arg678, and Lys684 each contribute to the ATP site. Asp703 serves as a coordination point for Mg(2+). ATP is bound at residue Asn706. A helical transmembrane segment spans residues 758 to 777 (KQFIRYLISSNVGEVVCIFL). Positions 768 and 771 each coordinate Ca(2+). Over 778 to 787 (TAALGLPEAL) the chain is Lumenal. Residues 788 to 808 (IPVQLLWVNLVTDGLPATALG) traverse the membrane as a helical segment. Residues 788–808 (IPVQLLWVNLVTDGLPATALG) form an interaction with PLN region. Asn796, Thr799, and Asp800 together coordinate Ca(2+). Residues 809–828 (FNPPDLDIMDRPPRSPKEPL) are Cytoplasmic-facing. The chain crosses the membrane as a helical span at residues 829–851 (ISGWLFFRYMAIGGYVGAATVGA). The Lumenal portion of the chain corresponds to 852–897 (AAWWFMYADDGPNVTFYQLSHFMQCTEDNPDFEGHECEIFESPVPM). A disulfide bond links Cys876 and Cys888. Residues 898–917 (TMALSVLVTIEMCNALNSLS) form a helical membrane-spanning segment. Ca(2+) is bound at residue Glu908. Residues 918-930 (ENQSLIRMPPWSN) are Cytoplasmic-facing. The helical transmembrane segment at 931–949 (FWLLGSICLSMSLHFLILY) threads the bilayer. The interval 932–943 (WLLGSICLSMSL) is interaction with PLN. Topologically, residues 950 to 964 (VEPLPMIFKLTPLNV) are lumenal. Residues 965 to 985 (EQWFIVLKMSFPVILLDELLK) form a helical membrane-spanning segment. Residues 986–994 (FVARNYLEG) lie on the Cytoplasmic side of the membrane.

It belongs to the cation transport ATPase (P-type) (TC 3.A.3) family. Type IIA subfamily. As to quaternary structure, interacts with sarcolipin (SLN). Interacts with phospholamban (PLN). Interacts with myoregulin (MRLN). Interacts with DWORF. Interacts with VMP1. Requires Mg(2+) as cofactor.

The protein resides in the endoplasmic reticulum membrane. Its subcellular location is the sarcoplasmic reticulum membrane. It carries out the reaction Ca(2+)(in) + ATP + H2O = Ca(2+)(out) + ADP + phosphate + H(+). With respect to regulation, inhibited by sarcolipin (SLN) and myoregulin (MRLN). Also shown to be inhibited by phospholamban (PLN) in vitro. Enhanced by DWORF; DWORF increases activity by displacing sarcolipin (SLN), phospholamban (PLN) and myoregulin (MRLN). Key regulator of striated muscle performance by acting as the major Ca(2+) ATPase responsible for the reuptake of cytosolic Ca(2+) into the sarcoplasmic reticulum. Catalyzes the hydrolysis of ATP coupled with the translocation of calcium from the cytosol to the sarcoplasmic reticulum lumen. Contributes to calcium sequestration involved in muscular excitation/contraction. The polypeptide is Sarcoplasmic/endoplasmic reticulum calcium ATPase 1 (ATP2A1) (Pelophylax lessonae (Pool frog)).